The primary structure comprises 245 residues: Orotidine 5'-phosphate decarboxylase (245 aa).

Residues aspartate 22, lysine 44, 71-80 (DLKFHDIPNT), threonine 131, arginine 192, glutamine 201, glycine 221, and arginine 222 each bind substrate. Lysine 73 serves as the catalytic Proton donor.

It belongs to the OMP decarboxylase family. Type 1 subfamily. In terms of assembly, homodimer.

The enzyme catalyses orotidine 5'-phosphate + H(+) = UMP + CO2. It participates in pyrimidine metabolism; UMP biosynthesis via de novo pathway; UMP from orotate: step 2/2. Its function is as follows. Catalyzes the decarboxylation of orotidine 5'-monophosphate (OMP) to uridine 5'-monophosphate (UMP). The sequence is that of Orotidine 5'-phosphate decarboxylase from Yersinia pseudotuberculosis serotype O:3 (strain YPIII).